A 374-amino-acid chain; its full sequence is Putative L-lysine 2,3-aminomutase aq_1632 (374 aa).

Residues 86 to 314 form the Radical SAM core domain; it reads HKYPDTALLL…ARVRYVMSHE (229 aa). Positions 100, 104, and 107 each coordinate [4Fe-4S] cluster. Lys-317 is modified (N6-(pyridoxal phosphate)lysine).

Belongs to the radical SAM superfamily. KamA family. The cofactor is [4Fe-4S] cluster. Pyridoxal 5'-phosphate is required as a cofactor.

The chain is Putative L-lysine 2,3-aminomutase aq_1632 from Aquifex aeolicus (strain VF5).